The following is a 332-amino-acid chain: Torsin-1A (332 aa).

Residues 1–20 (MKLGRAALGLLLLAPSVVQA) form the signal peptide. The interaction with SNAPIN stretch occupies residues 91 to 251 (KPKKPLTLSL…VSVFNNKNSG (161 aa)). 102–109 (GWTGTGKN) contacts ATP. 2 N-linked (GlcNAc...) asparagine glycosylation sites follow: Asn-143 and Asn-158. The segment at 251–332 (GFWHSSLIDR…FTKLDYYYDD (82 aa)) is interaction with KLC1. The tract at residues 312–332 (RVFSDKGCKTVFTKLDYYYDD) is interaction with SYNE3.

Belongs to the ClpA/ClpB family. Torsin subfamily. In terms of assembly, homohexamer. Interacts with TOR1B; the interaction may be specific of neural tissues. Interacts (ATP-bound) with TOR1AIP1 and TOR1AIP2; the interactions induce ATPase activity. Interacts with KLHL14; preferentially when ATP-free. Interacts with KLC1 (via TPR repeats); the interaction associates TOR1A with the kinesin oligomeric complex. Interacts with COPS4; the interaction associates TOR1A with the CSN complex. Interacts with SNAPIN; the interaction is direct and associates SNAPIN with the CSN complex. Interacts with STON2. Interacts (ATP-bound) with SYNE3 (via KASH domain); the interaction is required for SYNE3 nuclear envelope localization. Interacts with VIM; the interaction associates TOR1A with the cytoskeleton. Interacts with PLEC. Interacts (ATP-bound) with SLC6A3; regulates SLC6A3 transport to the plasma membrane. N-glycosylated.

Its subcellular location is the endoplasmic reticulum lumen. It is found in the nucleus membrane. It localises to the cell projection. The protein resides in the growth cone. The protein localises to the cytoplasmic vesicle membrane. Its subcellular location is the cytoplasmic vesicle. It is found in the secretory vesicle. It localises to the synaptic vesicle. The protein resides in the cytoplasm. The protein localises to the cytoskeleton. It carries out the reaction ATP + H2O = ADP + phosphate + H(+). Its function is as follows. Protein with chaperone functions important for the control of protein folding, processing, stability and localization as well as for the reduction of misfolded protein aggregates. Involved in the regulation of synaptic vesicle recycling, controls STON2 protein stability in collaboration with the COP9 signalosome complex (CSN). In the nucleus, may link the cytoskeleton with the nuclear envelope, this mechanism seems to be crucial for the control of nuclear polarity, cell movement and, specifically in neurons, nuclear envelope integrity. Participates in the cellular trafficking and may regulate the subcellular location of multipass membrane proteins such as the dopamine transporter SLC6A3, leading to the modulation of dopamine neurotransmission. In the endoplasmic reticulum, plays a role in the quality control of protein folding by increasing clearance of misfolded proteins such as SGCE variants or holding them in an intermediate state for proper refolding. May have a redundant function with TOR1B in non-neural tissues. The sequence is that of Torsin-1A (TOR1A) from Macaca fascicularis (Crab-eating macaque).